The sequence spans 379 residues: UDP-4-amino-4-deoxy-L-arabinose--oxoglutarate aminotransferase (379 aa).

Lys-182 carries the post-translational modification N6-(pyridoxal phosphate)lysine.

Belongs to the DegT/DnrJ/EryC1 family. ArnB subfamily. As to quaternary structure, homodimer. Pyridoxal 5'-phosphate serves as cofactor.

The enzyme catalyses UDP-4-amino-4-deoxy-beta-L-arabinose + 2-oxoglutarate = UDP-beta-L-threo-pentopyranos-4-ulose + L-glutamate. The protein operates within nucleotide-sugar biosynthesis; UDP-4-deoxy-4-formamido-beta-L-arabinose biosynthesis; UDP-4-deoxy-4-formamido-beta-L-arabinose from UDP-alpha-D-glucuronate: step 2/3. Its pathway is bacterial outer membrane biogenesis; lipopolysaccharide biosynthesis. Catalyzes the conversion of UDP-4-keto-arabinose (UDP-Ara4O) to UDP-4-amino-4-deoxy-L-arabinose (UDP-L-Ara4N). The modified arabinose is attached to lipid A and is required for resistance to polymyxin and cationic antimicrobial peptides. The protein is UDP-4-amino-4-deoxy-L-arabinose--oxoglutarate aminotransferase of Salmonella schwarzengrund (strain CVM19633).